Reading from the N-terminus, the 217-residue chain is Lipid transferase CIDEA (217 aa).

Residues 33–110 enclose the CIDE-N domain; sequence PARPFRVSNH…ILEKGQKWTP (78 aa). Residues 163-180 are amphipathic helix; the sequence is CTSFKAVLRNLLRFMSYA.

This sequence belongs to the CIDE family. Homodimer. Interacts with CIDEC. Directly interacts with CEBPB. Interacts with isoform CLSTN3beta of CLSTN3; inhibiting the lipid transferase activity of CIDEA. In terms of tissue distribution, highly expressed in brown adipose tissue and, at lower levels, in white adipose tissue (at protein level). Undetectable in undifferentiated preadipocytes. Expressed in mammary gland during pregnancy and lactation, in epithelial cells, but not in the surrounding adipose tissue. Secreted into milk via milk fat globules.

The protein localises to the lipid droplet. It is found in the nucleus. It carries out the reaction a triacyl-sn-glycerol(in) = a triacyl-sn-glycerol(out). Lipid transferase that promotes unilocular lipid droplet formation by mediating lipid droplet fusion. Lipid droplet fusion promotes their enlargement, restricting lipolysis and favoring lipid storage. Localizes on the lipid droplet surface, at focal contact sites between lipid droplets, and mediates atypical lipid droplet fusion by promoting directional net neutral lipid transfer from the smaller to larger lipid droplets. The transfer direction may be driven by the internal pressure difference between the contacting lipid droplet pair and occurs at a lower rate than that promoted by CIDEC. May also act as a CEBPB coactivator in epithelial cells to control the expression of a subset of CEBPB downstream target genes, including ID2, IGF1, PRLR, SOCS1, SOCS3, XDH, but not casein. By interacting with CEBPB, strengthens the association of CEBPB with the XDH promoter, increases histone acetylation and dissociates HDAC1 from the promoter. When overexpressed, induces apoptosis; the physiological significance of its role in apoptosis is unclear. In Mus musculus (Mouse), this protein is Lipid transferase CIDEA.